A 250-amino-acid polypeptide reads, in one-letter code: 3-deoxy-manno-octulosonate cytidylyltransferase (250 aa).

Belongs to the KdsB family.

Its subcellular location is the cytoplasm. It carries out the reaction 3-deoxy-alpha-D-manno-oct-2-ulosonate + CTP = CMP-3-deoxy-beta-D-manno-octulosonate + diphosphate. It functions in the pathway nucleotide-sugar biosynthesis; CMP-3-deoxy-D-manno-octulosonate biosynthesis; CMP-3-deoxy-D-manno-octulosonate from 3-deoxy-D-manno-octulosonate and CTP: step 1/1. It participates in bacterial outer membrane biogenesis; lipopolysaccharide biosynthesis. Its function is as follows. Activates KDO (a required 8-carbon sugar) for incorporation into bacterial lipopolysaccharide in Gram-negative bacteria. The polypeptide is 3-deoxy-manno-octulosonate cytidylyltransferase (Bacteroides thetaiotaomicron (strain ATCC 29148 / DSM 2079 / JCM 5827 / CCUG 10774 / NCTC 10582 / VPI-5482 / E50)).